Here is a 199-residue protein sequence, read N- to C-terminus: Putative peroxiredoxin ycf42 (199 aa).

In terms of domain architecture, Thioredoxin spans 8–165 (LRVGQLAPDF…TLRVLQAIQY (158 aa)). Catalysis depends on C53, which acts as the Cysteine sulfenic acid (-SOH) intermediate.

It belongs to the peroxiredoxin family. AhpC/Prx1 subfamily. In terms of assembly, homodimer; disulfide-linked, upon oxidation. In terms of processing, the Cys-53-SH group is the primary site of oxidation by H(2)O(2), and the oxidized Cys-53 (probably Cys-SOH) rapidly reacts with Cys-174-SH of the other subunit to form an intermolecular disulfide. This disulfide is subsequently reduced by thioredoxin.

The protein localises to the plastid. Its subcellular location is the chloroplast. The enzyme catalyses a hydroperoxide + [thioredoxin]-dithiol = an alcohol + [thioredoxin]-disulfide + H2O. In terms of biological role, thiol-specific peroxidase that catalyzes the reduction of hydrogen peroxide and organic hydroperoxides to water and alcohols, respectively. Plays a role in cell protection against oxidative stress by detoxifying peroxides. This chain is Putative peroxiredoxin ycf42 (ycf42), found in Pyropia yezoensis (Susabi-nori).